Reading from the N-terminus, the 474-residue chain is 6-phospho-beta-galactosidase (474 aa).

The D-galactose 6-phosphate site is built by Gln19, His116, Asn159, Glu160, and Asn297. The active-site Proton donor is Glu160. The active-site Nucleophile is Glu375. Positions 433, 434, 440, and 442 each coordinate D-galactose 6-phosphate.

Belongs to the glycosyl hydrolase 1 family.

It carries out the reaction a 6-phospho-beta-D-galactoside + H2O = D-galactose 6-phosphate + an alcohol. Its pathway is carbohydrate metabolism; lactose degradation; D-galactose 6-phosphate and beta-D-glucose from lactose 6-phosphate: step 1/1. This Lacticaseibacillus casei (Lactobacillus casei) protein is 6-phospho-beta-galactosidase.